Here is a 349-residue protein sequence, read N- to C-terminus: Fructose-1,6-bisphosphatase class 1 (349 aa).

Mg(2+) is bound by residues Glu113, Asp135, Ile137, and Asp138. Residues Asp138 to Ser141, Asn230, Tyr258, and Lys288 contribute to the substrate site. Glu294 is a binding site for Mg(2+).

The protein belongs to the FBPase class 1 family. In terms of assembly, homotetramer. Mg(2+) is required as a cofactor.

Its subcellular location is the cytoplasm. The catalysed reaction is beta-D-fructose 1,6-bisphosphate + H2O = beta-D-fructose 6-phosphate + phosphate. It functions in the pathway carbohydrate biosynthesis; Calvin cycle. The sequence is that of Fructose-1,6-bisphosphatase class 1 from Nostoc punctiforme (strain ATCC 29133 / PCC 73102).